A 1203-amino-acid chain; its full sequence is DNA-directed RNA polymerase subunit beta (1203 aa).

Basic and acidic residues predominate over residues 1174-1195 (AAQEAKAAFEAEEAEKATKAEA). A disordered region spans residues 1174 to 1203 (AAQEAKAAFEAEEAEKATKAEATEEAAEQE).

This sequence belongs to the RNA polymerase beta chain family. As to quaternary structure, the RNAP catalytic core consists of 2 alpha, 1 beta, 1 beta' and 1 omega subunit. When a sigma factor is associated with the core the holoenzyme is formed, which can initiate transcription.

It catalyses the reaction RNA(n) + a ribonucleoside 5'-triphosphate = RNA(n+1) + diphosphate. Its function is as follows. DNA-dependent RNA polymerase catalyzes the transcription of DNA into RNA using the four ribonucleoside triphosphates as substrates. The sequence is that of DNA-directed RNA polymerase subunit beta from Streptococcus pneumoniae (strain ATCC 700669 / Spain 23F-1).